Consider the following 525-residue polypeptide: GMP synthase [glutamine-hydrolyzing] (525 aa).

Residues 9–207 enclose the Glutamine amidotransferase type-1 domain; that stretch reads RILILDFGSQ…VLDICQCEAL (199 aa). Cys86 serves as the catalytic Nucleophile. Catalysis depends on residues His181 and Glu183. One can recognise a GMPS ATP-PPase domain in the interval 208–400; the sequence is WTPAKIIDDA…LGLPYNMLYR (193 aa). 235–241 contacts ATP; it reads SGGVDSS.

As to quaternary structure, homodimer.

It catalyses the reaction XMP + L-glutamine + ATP + H2O = GMP + L-glutamate + AMP + diphosphate + 2 H(+). Its pathway is purine metabolism; GMP biosynthesis; GMP from XMP (L-Gln route): step 1/1. In terms of biological role, catalyzes the synthesis of GMP from XMP. This is GMP synthase [glutamine-hydrolyzing] from Pectobacterium atrosepticum (strain SCRI 1043 / ATCC BAA-672) (Erwinia carotovora subsp. atroseptica).